We begin with the raw amino-acid sequence, 1282 residues long: MTSLFDALSRSNDRLPSPNFLPEDFLELLKSNDFDTKLTTLIRAATIAKREEDWFHKFQKKGELFKCIDKIICDDRWELQHQCIKFLVEAMPTFGSATEYCMCFVMPNLIPKLVSNKVTVRKITHQAIATFLRLKPEALQSFLKMLSNFMPNCNSKSELITELHHILIPELVKSNWTCLVENFTTESNIQGCEDQAGVLMKKLHYFIGNEFWQKIITNLSPEKREVLEQITANVQVEHTESKAGSGVLRASAKPQSGGERRLRFGIVPSLVCALIAEDTDANQRISGLEKMKQVVDQITPEEIARLVPHLHSYLLMLSNVLEDLNFKVVVLALDIVRATGHHLKGHMEAHIQQFVNLVAKHFGNQKSVIKQIIMMTFMELFQNINPKTVGGCLRVFLENKNSRVREEVINIYTASLMTISPSKFNLQPLVNILVPMFHDVKKRVRLAAFEQLSVLAYLLNGKTEIIMKPVRDFEQDQNSRGLTEAVTARIRRQVLPRIRYDGLIEYSTPPMMDSFDLAEAEMSLPSNADLSWIVSNGGVEPDPFERTMSPISLAGNLATIRRNRVIQQQGQAEKPSFSLPQQPAQQASHQAQRLPNGIEKSHETSENSSLDIGQRIVMTRMKSDDSFVRRQGSAASNPNSSTSSWEAPKRPPISPSEKSSISATKKEVNNNHIVKKGNLKSMRARSDTNLSEDHGEEEMENDPPRSFDDRPAKASGQYSFQDFDAAIVPSSMGKKSISHHSLPITSHPPLKHAISQPQKRINNNGTFLRSGQGQRTKSVSKPHRELTAVSKTYSLLDTSNMSVNQALKKMSSDEWADKVDGLNMISTLSETQPRMVADNLKEVIIAILNECKNLRSSVSRVAIVTIGTVAQNLNSKIDSEMEKICAVLLSKSGDVSNAFIRDDATDSLNKLVKAATAGKALQGIILAGAKSKNNTIRSSCANFVYDIITIQGSSAILNNQNALSNVLPVLLQFSRDQSPQVRNPGKQSLCFLSKDPNFDRLMRKNALESEIKAVKDVLANVEKRGGVDSLESTANLSGSLSRIGSTRRVQKKLPDSLQLDLDEIRTELLAAGWERRLTGLQRFEEMCGHASKAVASDTRLIEAFISRLGDTNGKVASCAMETYISTMGSMAKLYSTESNLKAVMNQLAHALTAHLSSKSEEHKHLARTCIQHTIRSIEPVSLLPAMTSATKKSNVKQRPFILTQYCELSKLAYKSKPKQVEVMALPLLWDSVKNSAPDVDNKKATQYLAKTLAKLIGEKQLLDLATSELDPNRKKQLDALIR.

TOG stretches follow at residues 33-240 (DFDT…EHTE) and 268-515 (PSLV…MDSF). 8 HEAT repeats span residues 59 to 96 (QKKG…TFGS), 100 to 137 (YCMC…LKPE), 162 to 209 (ELHH…FIGN), 261 to 300 (RLRF…QITP), 308 to 345 (PHLH…HLKG), 349 to 386 (AHIQ…NINP), 388 to 421 (TVGG…TISP), and 424 to 461 (FNLQ…LLNG). Positions 566–714 (IQQQGQAEKP…RSFDDRPAKA (149 aa)) are disordered. 2 stretches are compositionally biased toward low complexity: residues 575–592 (PSFS…HQAQ) and 633–644 (SAASNPNSSTSS). Positions 702-712 (DPPRSFDDRPA) are enriched in basic and acidic residues. TOG stretches follow at residues 800-1022 (NMSV…ANVE) and 1066-1282 (TELL…ALIR). HEAT repeat units lie at residues 838–875 (DNLK…NLNS), 879–917 (SEME…AATA), 919–953 (KALQ…IQGS), 961–998 (NALS…DPNF), 1095–1132 (ASDT…SMAK), 1177–1214 (IEPV…LAYK), and 1219–1258 (QVEV…LIGE).

This sequence belongs to the Crescerin family. Detected in a subset of amphid neurons that lack wing- or finger-like ciliary extensions. Likewise, detected in phasmid neurons.

Its subcellular location is the cell projection. The protein localises to the cilium. It localises to the perikaryon. The protein resides in the dendrite. In terms of biological role, required for normal structure and function of sensory cilia on amphid neurons, especially for the formation of distal ciliary structures, but is less important for normal assembly of middle and basal ciliary structures. Plays a role in the organization of axoneme microtubule bundles in sensory cilia. Required for normal structure and function of the ASER neuron that mediates attraction to NaCl. Required for normal chemotaxis to NaCl. Required for normal avoidance response to high osmolarity. In contrast, is not required for normal chemotaxis to isoamyl alcohol. Does not play a role in intraflagella transport (IFT). Promotes dauer formation in response to pheromones such as the ascarosides ascr#2, ascr#3, ascr#5, ascr#8 and icas#9. The sequence is that of Crescerin-like protein che-12 from Caenorhabditis elegans.